Consider the following 85-residue polypeptide: RNA-binding protein Hfq (85 aa).

Residues D10–V70 form the Sm domain.

Belongs to the Hfq family. In terms of assembly, homohexamer.

Functionally, RNA chaperone that binds small regulatory RNA (sRNAs) and mRNAs to facilitate mRNA translational regulation in response to envelope stress, environmental stress and changes in metabolite concentrations. Also binds with high specificity to tRNAs. This is RNA-binding protein Hfq from Carboxydothermus hydrogenoformans (strain ATCC BAA-161 / DSM 6008 / Z-2901).